The primary structure comprises 160 residues: Protein-export protein SecB (160 aa).

The protein belongs to the SecB family. Homotetramer, a dimer of dimers. One homotetramer interacts with 1 SecA dimer.

The protein resides in the cytoplasm. One of the proteins required for the normal export of preproteins out of the cell cytoplasm. It is a molecular chaperone that binds to a subset of precursor proteins, maintaining them in a translocation-competent state. It also specifically binds to its receptor SecA. This is Protein-export protein SecB from Azorhizobium caulinodans (strain ATCC 43989 / DSM 5975 / JCM 20966 / LMG 6465 / NBRC 14845 / NCIMB 13405 / ORS 571).